A 252-amino-acid chain; its full sequence is 3-dehydroquinate dehydratase (252 aa).

3-dehydroquinate-binding positions include serine 21, 46-48, and arginine 82; that span reads EWR. Residue histidine 143 is the Proton donor/acceptor of the active site. Residue lysine 170 is the Schiff-base intermediate with substrate of the active site. Residues arginine 213, serine 232, and glutamine 236 each coordinate 3-dehydroquinate.

Belongs to the type-I 3-dehydroquinase family. Homodimer.

It carries out the reaction 3-dehydroquinate = 3-dehydroshikimate + H2O. The protein operates within metabolic intermediate biosynthesis; chorismate biosynthesis; chorismate from D-erythrose 4-phosphate and phosphoenolpyruvate: step 3/7. Functionally, involved in the third step of the chorismate pathway, which leads to the biosynthesis of aromatic amino acids. Catalyzes the cis-dehydration of 3-dehydroquinate (DHQ) and introduces the first double bond of the aromatic ring to yield 3-dehydroshikimate. In Shigella sonnei (strain Ss046), this protein is 3-dehydroquinate dehydratase.